The following is a 98-amino-acid chain: Histone H4-1 (98 aa).

Residues M1 to K14 are compositionally biased toward gly residues. Residues M1–R20 form a disordered region.

It belongs to the histone H4 family. As to quaternary structure, the nucleosome is a histone octamer containing two molecules each of H2A, H2B, H3 and H4 assembled in one H3-H4 heterotetramer and two H2A-H2B heterodimers. The octamer wraps approximately 147 bp of DNA.

It localises to the nucleus. The protein resides in the chromosome. Its function is as follows. Core component of nucleosome. Nucleosomes wrap and compact DNA into chromatin, limiting DNA accessibility to the cellular machineries which require DNA as a template. Histones thereby play a central role in transcription regulation, DNA repair, DNA replication and chromosomal stability. DNA accessibility is regulated via a complex set of post-translational modifications of histones, also called histone code, and nucleosome remodeling. This Blepharisma japonicum protein is Histone H4-1.